A 74-amino-acid chain; its full sequence is UPF0352 protein PM1884 (74 aa).

This sequence belongs to the UPF0352 family.

The protein is UPF0352 protein PM1884 of Pasteurella multocida (strain Pm70).